We begin with the raw amino-acid sequence, 117 residues long: Large ribosomal subunit protein uL18 (117 aa).

This sequence belongs to the universal ribosomal protein uL18 family. As to quaternary structure, part of the 50S ribosomal subunit; part of the 5S rRNA/L5/L18/L25 subcomplex. Contacts the 5S and 23S rRNAs.

In terms of biological role, this is one of the proteins that bind and probably mediate the attachment of the 5S RNA into the large ribosomal subunit, where it forms part of the central protuberance. This chain is Large ribosomal subunit protein uL18, found in Alkalilimnicola ehrlichii (strain ATCC BAA-1101 / DSM 17681 / MLHE-1).